A 74-amino-acid chain; its full sequence is Exodeoxyribonuclease 7 small subunit (74 aa).

This sequence belongs to the XseB family. As to quaternary structure, heterooligomer composed of large and small subunits.

It localises to the cytoplasm. It carries out the reaction Exonucleolytic cleavage in either 5'- to 3'- or 3'- to 5'-direction to yield nucleoside 5'-phosphates.. Functionally, bidirectionally degrades single-stranded DNA into large acid-insoluble oligonucleotides, which are then degraded further into small acid-soluble oligonucleotides. This chain is Exodeoxyribonuclease 7 small subunit, found in Vesicomyosocius okutanii subsp. Calyptogena okutanii (strain HA).